Here is a 341-residue protein sequence, read N- to C-terminus: L-threonine 3-dehydrogenase (341 aa).

Cysteine 38 is a binding site for Zn(2+). Residues threonine 40 and histidine 43 each act as charge relay system in the active site. Residues histidine 63, glutamate 64, cysteine 93, cysteine 96, cysteine 99, and cysteine 107 each coordinate Zn(2+). NAD(+) contacts are provided by residues isoleucine 175, aspartate 195, arginine 200, 262–264 (LGI), and 286–287 (IY).

Belongs to the zinc-containing alcohol dehydrogenase family. Homotetramer. Zn(2+) serves as cofactor.

Its subcellular location is the cytoplasm. It carries out the reaction L-threonine + NAD(+) = (2S)-2-amino-3-oxobutanoate + NADH + H(+). Its pathway is amino-acid degradation; L-threonine degradation via oxydo-reductase pathway; glycine from L-threonine: step 1/2. Its function is as follows. Catalyzes the NAD(+)-dependent oxidation of L-threonine to 2-amino-3-ketobutyrate. The sequence is that of L-threonine 3-dehydrogenase from Salmonella choleraesuis (strain SC-B67).